A 486-amino-acid polypeptide reads, in one-letter code: Transmembrane protein 39A (486 aa).

Asn-31 is a glycosylation site (N-linked (GlcNAc...) asparagine). Helical transmembrane passes span Ser-72–Ile-92, Thr-110–Ala-130, Leu-155–Val-175, Ser-182–Phe-202, Glu-285–Val-305, Cys-317–Pro-337, Val-418–Leu-438, and Asn-444–Leu-464.

It belongs to the TMEM39 family. Interacts with SACM1L, SEC23A and SEC24A.

It localises to the endoplasmic reticulum membrane. Regulates autophagy by controlling the spatial distribution and levels of the intracellular phosphatidylinositol 4-phosphate (PtdIns(4)P) pools. Modulates (PtdIns(4)P) levels by regulating the ER-to-Golgi trafficking of the phosphatidylinositide phosphatase SACM1L. The chain is Transmembrane protein 39A (Tmem39a) from Mus musculus (Mouse).